Consider the following 47-residue polypeptide: Ruminococcin-A (47 aa).

A signal peptide spans 1-23; the sequence is MRNDVLTLTNPMEEKELEQILGG. Residues Thr30 and Thr39 each carry the 2,3-didehydrobutyrine modification. A cross-link (beta-methyllanthionine (Thr-Cys)) is located at residues 30 to 35; the sequence is TISHEC. A cross-link (lanthionine (Ser-Cys)) is located at residues 32–46; it reads SHECNMNTWQFLFTC. A cross-link (beta-methyllanthionine (Thr-Cys)) is located at residues 45–47; sequence TCC.

Maturation of lantibiotics involves the enzymatic conversion of Thr, and Ser into dehydrated AA and the formation of thioether bonds with cysteine. This is followed by membrane translocation and cleavage of the modified precursor. In terms of processing, it is not established whether the 2,3-didehydrobutyrine is the E- or Z-isomer.

It localises to the secreted. Lanthionine-containing peptide antibiotic (lantibiotic) active on Gram-positive bacteria. The bactericidal activity of lantibiotics is based on depolarization of energized bacterial cytoplasmic membranes, initiated by the formation of aqueous transmembrane pores. Ruminococcin A is a broad spectrum bacteriocin exhibiting activity against a wide range of pathogenic clostridia and B.longum. In Mediterraneibacter gnavus (Ruminococcus gnavus), this protein is Ruminococcin-A (rumA1).